Reading from the N-terminus, the 826-residue chain is Outer membrane usher protein YehB (826 aa).

Residues 1 to 22 (MLRMTPLASAIVALLLGIEAYA) form the signal peptide. Cys809 and Cys825 form a disulfide bridge.

This sequence belongs to the fimbrial export usher family.

It localises to the cell outer membrane. Part of the yehABCD fimbrial operon. Could contribute to adhesion to various surfaces in specific environmental niches. Probably involved in the export and assembly of fimbrial subunits across the outer membrane. This is Outer membrane usher protein YehB (yehB) from Escherichia coli (strain K12).